The sequence spans 614 residues: Syringomycin synthase SyrB1 (614 aa).

Residues 535-610 (KGLSEQEHFV…VLADHITRSL (76 aa)) enclose the Carrier domain. Ser-570 is subject to O-(pantetheine 4'-phosphoryl)serine.

Belongs to the ATP-dependent AMP-binding enzyme family. The cofactor is pantetheine 4'-phosphate.

It catalyses the reaction holo-[peptidyl-carrier protein] + L-threonine + ATP = L-threonyl-[peptidyl-carrier protein] + AMP + diphosphate. Its function is as follows. Involved in the biosynthesis of syringomycin E, a cyclic lipodepsinonapeptide toxin with phytotoxic activity. Specifically adenylates L-threonine and loads it onto its peptidyl carrier domain, via a thioester linkage to the phosphopanthetheine moiety. Is highly specific for L-threonine. The polypeptide is Syringomycin synthase SyrB1 (Pseudomonas syringae pv. syringae).